Consider the following 519-residue polypeptide: Xylose import ATP-binding protein XylG (519 aa).

2 ABC transporter domains span residues 6–245 (MTMR…VGRE) and 262–507 (FEAR…IRPV). ATP is bound at residue 38 to 45 (GENGAGKS).

This sequence belongs to the ABC transporter superfamily. Xylose importer (TC 3.A.1.2.4) family. In terms of assembly, the complex is composed of two ATP-binding proteins (XylG), two transmembrane proteins (XylH) and a solute-binding protein (XylF).

It localises to the cell inner membrane. It carries out the reaction D-xylose(out) + ATP + H2O = D-xylose(in) + ADP + phosphate + H(+). In terms of biological role, part of the ABC transporter complex XylFGH involved in xylose import. Responsible for energy coupling to the transport system. The protein is Xylose import ATP-binding protein XylG of Paraburkholderia xenovorans (strain LB400).